The chain runs to 220 residues: FMN-dependent NADH:quinone oxidoreductase (220 aa).

FMN-binding positions include Ser10, 17-19 (SAS), and 136-139 (SRGG). Residues 200–220 (HSEAVTKAKELTERLTADNGR) form a disordered region.

The protein belongs to the azoreductase type 1 family. In terms of assembly, homodimer. FMN serves as cofactor.

The enzyme catalyses 2 a quinone + NADH + H(+) = 2 a 1,4-benzosemiquinone + NAD(+). It catalyses the reaction N,N-dimethyl-1,4-phenylenediamine + anthranilate + 2 NAD(+) = 2-(4-dimethylaminophenyl)diazenylbenzoate + 2 NADH + 2 H(+). Functionally, quinone reductase that provides resistance to thiol-specific stress caused by electrophilic quinones. In terms of biological role, also exhibits azoreductase activity. Catalyzes the reductive cleavage of the azo bond in aromatic azo compounds to the corresponding amines. This is FMN-dependent NADH:quinone oxidoreductase from Streptomyces coelicolor (strain ATCC BAA-471 / A3(2) / M145).